The following is a 1456-amino-acid chain: Alpha-2-macroglobulin-like protein 1 (1456 aa).

The N-terminal stretch at 1-19 (MVPTILLSALLLHFTDVVA) is a signal peptide. Asn-48, Asn-172, and Asn-868 each carry an N-linked (GlcNAc...) asparagine glycan.

The protein belongs to the protease inhibitor I39 (alpha-2-macroglobulin) family. In terms of assembly, homotetramer; consists of two dimer pairs that are disulfide-linked. Part of a complex composed of complement component C3, CLCA1/CLCA3, A2ML1/OH and ALB/serum albumin.

Its subcellular location is the secreted. Functionally, inhibits protease gelatinolytic complex activity against type 1 collagen. The polypeptide is Alpha-2-macroglobulin-like protein 1 (Mus musculus (Mouse)).